We begin with the raw amino-acid sequence, 264 residues long: Small ribosomal subunit protein uS2 (264 aa).

Belongs to the universal ribosomal protein uS2 family.

The polypeptide is Small ribosomal subunit protein uS2 (Latilactobacillus sakei subsp. sakei (strain 23K) (Lactobacillus sakei subsp. sakei)).